A 685-amino-acid polypeptide reads, in one-letter code: Probable cysteine desulfurase (685 aa).

Residues 1–282 (MTRSPCSTTS…RDEHEVFDVA (282 aa)) form a cargo-loading domain region. Disordered regions lie at residues 48–135 (SIRP…TSAG) and 162–185 (PTPA…VPDT). Residues 71–85 (ATAATSAGRTAAGTA) are compositionally biased toward low complexity. Over residues 102–121 (LPPPASPAPEAPPQAAPPAP) the composition is skewed to pro residues. Residues 122-135 (RGSAPDATAATSAG) are compositionally biased toward low complexity. Pro residues predominate over residues 164 to 178 (PAGPEAPPQSAPPAP). Lys-502 bears the N6-(pyridoxal phosphate)lysine mark. The Cysteine persulfide intermediate role is filled by Cys-640.

The protein belongs to the class-V pyridoxal-phosphate-dependent aminotransferase family. Csd subfamily. Isolated from bacteria in a complex with encapsulin 2A (AC I3NID5), strongly suggesting it is found in a type 2A encapsulin nanocompartment. There are 1-2 copies of this protein in each encapsulin shell. Requires pyridoxal 5'-phosphate as cofactor.

Its subcellular location is the encapsulin nanocompartment. It localises to the cell membrane. It catalyses the reaction (sulfur carrier)-H + L-cysteine = (sulfur carrier)-SH + L-alanine. Cargo protein of a type 2A encapsulin nanocompartment involved in sulfur metabolism. Cysteine desulfurases mobilize the sulfur from L-cysteine to yield L-alanine, an essential step in sulfur metabolism for biosynthesis of a variety of sulfur-containing biomolecules. The chain is Probable cysteine desulfurase from Mycolicibacterium paratuberculosis (strain ATCC BAA-968 / K-10) (Mycobacterium paratuberculosis).